Here is a 479-residue protein sequence, read N- to C-terminus: HSPB1-associated protein 1 (479 aa).

Positions 1 to 25 (MEAGCEGSSPQTLGERTMGEEGERV) are disordered. Residues 88–208 (ETECSYVDAT…EDTPFLYPTR (121 aa)) are interaction with HSPB1. A JmjC domain is found at 124–288 (WAYADYKYFV…HLARVEEAVT (165 aa)). Residues 347–412 (PRANGEEPGV…GDSQECTSRN (66 aa)) form a disordered region. A compositionally biased stretch (basic and acidic residues) spans 356–369 (VQEHMEVEQARDPS).

As to quaternary structure, interacts with CRYAB and HSPB1. As to expression, widely expressed. Highly expressed by Sertoli cells in testis (at protein level).

It is found in the cytoplasm. Its function is as follows. May play a role in cellular stress response. The polypeptide is HSPB1-associated protein 1 (Hspbap1) (Rattus norvegicus (Rat)).